The sequence spans 356 residues: UDP-N-acetylglucosamine--N-acetylmuramyl-(pentapeptide) pyrophosphoryl-undecaprenol N-acetylglucosamine transferase (356 aa).

UDP-N-acetyl-alpha-D-glucosamine contacts are provided by residues 12-14 (TGG), Asn-124, Arg-163, Ser-188, Ile-242, and Gln-287.

This sequence belongs to the glycosyltransferase 28 family. MurG subfamily.

It localises to the cell inner membrane. It catalyses the reaction di-trans,octa-cis-undecaprenyl diphospho-N-acetyl-alpha-D-muramoyl-L-alanyl-D-glutamyl-meso-2,6-diaminopimeloyl-D-alanyl-D-alanine + UDP-N-acetyl-alpha-D-glucosamine = di-trans,octa-cis-undecaprenyl diphospho-[N-acetyl-alpha-D-glucosaminyl-(1-&gt;4)]-N-acetyl-alpha-D-muramoyl-L-alanyl-D-glutamyl-meso-2,6-diaminopimeloyl-D-alanyl-D-alanine + UDP + H(+). It functions in the pathway cell wall biogenesis; peptidoglycan biosynthesis. Its function is as follows. Cell wall formation. Catalyzes the transfer of a GlcNAc subunit on undecaprenyl-pyrophosphoryl-MurNAc-pentapeptide (lipid intermediate I) to form undecaprenyl-pyrophosphoryl-MurNAc-(pentapeptide)GlcNAc (lipid intermediate II). This is UDP-N-acetylglucosamine--N-acetylmuramyl-(pentapeptide) pyrophosphoryl-undecaprenol N-acetylglucosamine transferase from Pseudomonas savastanoi pv. phaseolicola (strain 1448A / Race 6) (Pseudomonas syringae pv. phaseolicola (strain 1448A / Race 6)).